Here is a 116-residue protein sequence, read N- to C-terminus: Alpha-amylase inhibitor 5 (116 aa).

Disulfide bonds link Cys4–Cys55, Cys18–Cys44, Cys27–Cys77, Cys45–Cys95, and Cys57–Cys106.

The protein belongs to the protease inhibitor I6 (cereal trypsin/alpha-amylase inhibitor) family.

It localises to the secreted. Functionally, alpha-amylase inhibitor. This chain is Alpha-amylase inhibitor 5, found in Sorghum bicolor (Sorghum).